The primary structure comprises 222 residues: Cytidylate kinase (222 aa).

Residue 10-18 participates in ATP binding; it reads GPSASGKGT.

Belongs to the cytidylate kinase family. Type 1 subfamily.

Its subcellular location is the cytoplasm. The catalysed reaction is CMP + ATP = CDP + ADP. It catalyses the reaction dCMP + ATP = dCDP + ADP. The sequence is that of Cytidylate kinase from Chromobacterium violaceum (strain ATCC 12472 / DSM 30191 / JCM 1249 / CCUG 213 / NBRC 12614 / NCIMB 9131 / NCTC 9757 / MK).